The primary structure comprises 245 residues: Probable phosphatase Ent638_1550 (245 aa).

Residues histidine 7, histidine 9, histidine 15, histidine 40, glutamate 73, histidine 101, histidine 131, aspartate 192, and histidine 194 each coordinate Zn(2+).

This sequence belongs to the PHP family. In terms of assembly, homotrimer. Zn(2+) serves as cofactor.

The chain is Probable phosphatase Ent638_1550 from Enterobacter sp. (strain 638).